Reading from the N-terminus, the 317-residue chain is Probable deoxyhypusine synthase 1 (317 aa).

K285 serves as the catalytic Nucleophile.

This sequence belongs to the deoxyhypusine synthase family. NAD(+) serves as cofactor.

It carries out the reaction [eIF5A protein]-L-lysine + spermidine = [eIF5A protein]-deoxyhypusine + propane-1,3-diamine. The protein operates within protein modification; eIF5A hypusination. Its function is as follows. Catalyzes the NAD-dependent oxidative cleavage of spermidine and the subsequent transfer of the butylamine moiety of spermidine to the epsilon-amino group of a specific lysine residue of the eIF-5A precursor protein to form the intermediate deoxyhypusine residue. The sequence is that of Probable deoxyhypusine synthase 1 (dys1) from Methanosarcina acetivorans (strain ATCC 35395 / DSM 2834 / JCM 12185 / C2A).